A 138-amino-acid chain; its full sequence is Thyrotropin subunit beta (138 aa).

Positions 1 to 20 (MTAIFLMSVLFGLACGQAMS) are cleaved as a signal peptide. Cystine bridges form between cysteine 22–cysteine 72, cysteine 36–cysteine 87, cysteine 39–cysteine 125, cysteine 47–cysteine 103, cysteine 51–cysteine 105, and cysteine 108–cysteine 115. Asparagine 43 carries N-linked (GlcNAc...) asparagine glycosylation. Positions 133 to 138 (VVGLSI) are excised as a propeptide.

Belongs to the glycoprotein hormones subunit beta family. Heterodimer of a common alpha chain and a unique beta chain which confers biological specificity to thyrotropin, lutropin, follitropin and gonadotropin.

The protein localises to the secreted. Its function is as follows. Indispensable for the control of thyroid structure and metabolism. The chain is Thyrotropin subunit beta (TSHB) from Lama glama (Llama).